Reading from the N-terminus, the 538-residue chain is Spindle pole body protein CSA6 (538 aa).

2 disordered regions span residues 1–31 and 57–129; these read MEDS…TSDL and QNIS…KYQD. 2 stretches are compositionally biased toward basic and acidic residues: residues 18 to 30 and 57 to 68; these read PEIK…KTSD and QNISDSEHDLTP. 2 stretches are compositionally biased toward polar residues: residues 86 to 96 and 104 to 122; these read KFSSSIPQKPT and TSPT…SGPN. Positions 144 to 237 form a coiled coil; the sequence is KQEQNLKLEN…RNERDELVKD (94 aa). Over residues 304 to 323 the composition is skewed to basic and acidic residues; that stretch reads KKISEPSAAVEKDTTSEDKT. Disordered regions lie at residues 304–338 and 355–458; these read KKIS…TPRM and SSNN…STKY. 2 stretches are compositionally biased toward polar residues: residues 355–392 and 407–425; these read SSNN…SAAY and TNFY…QSSQ. Residues 426 to 444 are compositionally biased toward basic and acidic residues; the sequence is SDERPETFELPHVAKDHWL. Residues 446-457 show a composition bias toward polar residues; that stretch reads RPTSERSTQSTK.

The protein resides in the cytoplasm. It is found in the cytoskeleton. It localises to the microtubule organizing center. The protein localises to the spindle pole body. Its function is as follows. Plays a role in mitotic spindle pole body organization, possibly at the point of spindle pole body separation. Required for mitotic exit. In Candida albicans (strain SC5314 / ATCC MYA-2876) (Yeast), this protein is Spindle pole body protein CSA6.